A 196-amino-acid polypeptide reads, in one-letter code: Ankyrin repeat domain-containing protein 66 (196 aa).

3 ANK repeats span residues 7-37 (SDMT…DPNY), 43-72 (NDRT…RPCL), and 76-105 (VGWT…AIDA). Residues 152–196 (ERDEDWDAKKRELELSLPSLNQNMNKKNKKSRGPTRPSNTKGRRV) form a disordered region. A compositionally biased stretch (polar residues) spans 187–196 (RPSNTKGRRV).

The sequence is that of Ankyrin repeat domain-containing protein 66 (ANKRD66) from Homo sapiens (Human).